The primary structure comprises 380 residues: Small ribosomal subunit protein uS3m (380 aa).

Belongs to the universal ribosomal protein uS3 family.

The protein localises to the mitochondrion. Functionally, essential for mitochondrial protein synthesis and required for the maturation of small ribosomal subunits. The polypeptide is Small ribosomal subunit protein uS3m (VAR1) (Cyberlindnera mrakii (Yeast)).